Here is a 427-residue protein sequence, read N- to C-terminus: Trigger factor (427 aa).

The region spanning 163–248 (GDTVVIDFVG…IHEVKAKEVP (86 aa)) is the PPIase FKBP-type domain.

It belongs to the FKBP-type PPIase family. Tig subfamily.

It localises to the cytoplasm. The catalysed reaction is [protein]-peptidylproline (omega=180) = [protein]-peptidylproline (omega=0). Its function is as follows. Involved in protein export. Acts as a chaperone by maintaining the newly synthesized protein in an open conformation. Functions as a peptidyl-prolyl cis-trans isomerase. This Streptococcus pneumoniae (strain Hungary19A-6) protein is Trigger factor.